Consider the following 146-residue polypeptide: Hemoglobin subunit beta-C (146 aa).

Residues 2 to 146 (EWTDFERATI…VVSSLGRQYH (145 aa)) form the Globin domain. Positions 63 and 92 each coordinate heme b.

It belongs to the globin family. HbC is a heterotetramer of two alpha chains and two beta-C chains. In terms of tissue distribution, red blood cells.

Functionally, involved in oxygen transport from gills to the various peripheral tissues. In Trematomus bernacchii (Emerald rockcod), this protein is Hemoglobin subunit beta-C (hbbc).